The sequence spans 396 residues: S-arrestin (396 aa).

Residues 375–386 show a composition bias toward basic and acidic residues; sequence ARDPLKGELQAE. The interval 375 to 396 is disordered; that stretch reads ARDPLKGELQAEEKEEEEDDEK. The span at 387-396 shows a compositional bias: acidic residues; it reads EKEEEEDDEK.

Belongs to the arrestin family. In terms of assembly, interacts with RHO (via the phosphorylated C-terminus).

It is found in the cell projection. The protein resides in the cilium. Its subcellular location is the photoreceptor outer segment. The protein localises to the membrane. In terms of biological role, binds to photoactivated, phosphorylated RHO and terminates RHO signaling via G-proteins by competing with G-proteins for the same binding site on RHO. May play a role in preventing light-dependent degeneration of retinal photoreceptor cells. This chain is S-arrestin (sag), found in Xenopus laevis (African clawed frog).